Consider the following 172-residue polypeptide: Adenine phosphoribosyltransferase (172 aa).

It belongs to the purine/pyrimidine phosphoribosyltransferase family. As to quaternary structure, homodimer.

It is found in the cytoplasm. It catalyses the reaction AMP + diphosphate = 5-phospho-alpha-D-ribose 1-diphosphate + adenine. It participates in purine metabolism; AMP biosynthesis via salvage pathway; AMP from adenine: step 1/1. In terms of biological role, catalyzes a salvage reaction resulting in the formation of AMP, that is energically less costly than de novo synthesis. The chain is Adenine phosphoribosyltransferase from Prochlorococcus marinus (strain SARG / CCMP1375 / SS120).